A 43-amino-acid chain; its full sequence is CLAVATA3/ESR (CLE)-related protein 16D10 (43 aa).

Positions 1–30 (MFTNSIKNLIIYLMPLMVTLMLLSVSFVDA) are cleaved as a signal peptide. Residues 31-43 (GKKPSGPNPGGNN) carry the CLE motif.

This sequence belongs to the CLV3/ESR signal peptide family. In terms of tissue distribution, highly expressed exclusively within the subventral esophageal gland cell during syncytium formation in host plants.

Its subcellular location is the secreted. The protein resides in the host cytoplasm. It is found in the host extracellular space. Functionally, plays a role in the differentiation or division of feeding cells (syncytia) induced in plant roots during infection. Promotes host root growth. The chain is CLAVATA3/ESR (CLE)-related protein 16D10 (16D10) from Meloidogyne arenaria (Peanut root-knot nematode).